The sequence spans 142 residues: Large ribosomal subunit protein uL13 (142 aa).

This sequence belongs to the universal ribosomal protein uL13 family. Part of the 50S ribosomal subunit.

This protein is one of the early assembly proteins of the 50S ribosomal subunit, although it is not seen to bind rRNA by itself. It is important during the early stages of 50S assembly. This is Large ribosomal subunit protein uL13 from Pelobacter propionicus (strain DSM 2379 / NBRC 103807 / OttBd1).